The chain runs to 494 residues: Acetyl-coenzyme A carboxylase carboxyl transferase subunit beta, chloroplastic (494 aa).

In terms of domain architecture, CoA carboxyltransferase N-terminal spans 226–494 (LWVQCENCYG…VPLNQNETEH (269 aa)). Positions 230, 233, 249, and 252 each coordinate Zn(2+). The C4-type zinc-finger motif lies at 230–252 (CENCYGLNYKKFLKSKMNICEQC).

The protein belongs to the AccD/PCCB family. In terms of assembly, acetyl-CoA carboxylase is a heterohexamer composed of biotin carboxyl carrier protein, biotin carboxylase and 2 subunits each of ACCase subunit alpha and ACCase plastid-coded subunit beta (accD). It depends on Zn(2+) as a cofactor.

It is found in the plastid. The protein resides in the chloroplast stroma. The catalysed reaction is N(6)-carboxybiotinyl-L-lysyl-[protein] + acetyl-CoA = N(6)-biotinyl-L-lysyl-[protein] + malonyl-CoA. Its pathway is lipid metabolism; malonyl-CoA biosynthesis; malonyl-CoA from acetyl-CoA: step 1/1. Its function is as follows. Component of the acetyl coenzyme A carboxylase (ACC) complex. Biotin carboxylase (BC) catalyzes the carboxylation of biotin on its carrier protein (BCCP) and then the CO(2) group is transferred by the transcarboxylase to acetyl-CoA to form malonyl-CoA. This is Acetyl-coenzyme A carboxylase carboxyl transferase subunit beta, chloroplastic from Coffea arabica (Arabian coffee).